The primary structure comprises 384 residues: Galactokinase (384 aa).

Position 34–37 (34–37 (EHTD)) interacts with substrate. 123–129 (SSGLSSS) lines the ATP pocket. Positions 129 and 161 each coordinate Mg(2+). Asp173 acts as the Proton acceptor in catalysis. Substrate is bound at residue Tyr222.

The protein belongs to the GHMP kinase family. GalK subfamily.

The protein resides in the cytoplasm. The catalysed reaction is alpha-D-galactose + ATP = alpha-D-galactose 1-phosphate + ADP + H(+). The protein operates within carbohydrate metabolism; galactose metabolism. Functionally, catalyzes the transfer of the gamma-phosphate of ATP to D-galactose to form alpha-D-galactose-1-phosphate (Gal-1-P). In Glaesserella parasuis serovar 5 (strain SH0165) (Haemophilus parasuis), this protein is Galactokinase.